A 520-amino-acid polypeptide reads, in one-letter code: GMP synthase [glutamine-hydrolyzing] (520 aa).

Residues 3 to 200 (AIAIIDFGSQ…FLDIANCKRD (198 aa)) enclose the Glutamine amidotransferase type-1 domain. The active-site Nucleophile is C84. Catalysis depends on residues H175 and E177. The GMPS ATP-PPase domain occupies 201 to 386 (WTMKSIIEKQ…IGLSNEIIFQ (186 aa)). Residue 228–234 (SGGVDSS) coordinates ATP.

In terms of assembly, homodimer.

The catalysed reaction is XMP + L-glutamine + ATP + H2O = GMP + L-glutamate + AMP + diphosphate + 2 H(+). It participates in purine metabolism; GMP biosynthesis; GMP from XMP (L-Gln route): step 1/1. In terms of biological role, catalyzes the synthesis of GMP from XMP. The sequence is that of GMP synthase [glutamine-hydrolyzing] from Wolbachia sp. subsp. Brugia malayi (strain TRS).